Reading from the N-terminus, the 167-residue chain is Homeobox protein EgHBX3 (167 aa).

The segment at residues 80-139 (SQSKRRVLFNKFQISQLEKRLKQRYLTAQERQELAHTIGLTPTQVKIWFQNHAYKMKRLF) is a DNA-binding region (homeobox).

It belongs to the NK-2 homeobox family.

Its subcellular location is the nucleus. The protein is Homeobox protein EgHBX3 (HBX3) of Echinococcus granulosus (Hydatid tapeworm).